Reading from the N-terminus, the 535-residue chain is Inositol 1,4,5-trisphosphate receptor-interacting protein-like 2 (535 aa).

A signal peptide spans 1-38 (MSVHYTLNLRVFWPLVTGLCTALVCLYHVLRGSGGARA). Topologically, residues 39-43 (EPADG) are extracellular. Residues 44–64 (VDGGFPLLKVAVLLLLSYVLL) traverse the membrane as a helical segment. Topologically, residues 65–535 (RCRHAVRQRF…RTQGFLEGEP (471 aa)) are cytoplasmic. S139 is modified (phosphoserine).

It belongs to the ITPRIP family.

Its subcellular location is the membrane. The polypeptide is Inositol 1,4,5-trisphosphate receptor-interacting protein-like 2 (ITPRIPL2) (Homo sapiens (Human)).